A 179-amino-acid chain; its full sequence is Large ribosomal subunit protein uL5 (179 aa).

This sequence belongs to the universal ribosomal protein uL5 family. In terms of assembly, part of the 50S ribosomal subunit; part of the 5S rRNA/L5/L18/L25 subcomplex. Contacts the 5S rRNA and the P site tRNA. Forms a bridge to the 30S subunit in the 70S ribosome.

Its function is as follows. This is one of the proteins that bind and probably mediate the attachment of the 5S RNA into the large ribosomal subunit, where it forms part of the central protuberance. In the 70S ribosome it contacts protein S13 of the 30S subunit (bridge B1b), connecting the 2 subunits; this bridge is implicated in subunit movement. Contacts the P site tRNA; the 5S rRNA and some of its associated proteins might help stabilize positioning of ribosome-bound tRNAs. The sequence is that of Large ribosomal subunit protein uL5 from Mannheimia succiniciproducens (strain KCTC 0769BP / MBEL55E).